We begin with the raw amino-acid sequence, 294 residues long: Pyridoxal 5'-phosphate synthase subunit PdxS (294 aa).

Asp-24 lines the D-ribose 5-phosphate pocket. Lys-81 (schiff-base intermediate with D-ribose 5-phosphate) is an active-site residue. D-ribose 5-phosphate is bound at residue Gly-153. Position 165 (Arg-165) interacts with D-glyceraldehyde 3-phosphate. Residues Gly-214 and 235 to 236 (GS) contribute to the D-ribose 5-phosphate site.

This sequence belongs to the PdxS/SNZ family. As to quaternary structure, homohexamer and homododecamer. In the presence of PdxT, forms a dodecamer of heterodimers.

The enzyme catalyses aldehydo-D-ribose 5-phosphate + D-glyceraldehyde 3-phosphate + L-glutamine = pyridoxal 5'-phosphate + L-glutamate + phosphate + 3 H2O + H(+). The protein operates within cofactor biosynthesis; pyridoxal 5'-phosphate biosynthesis. Functionally, catalyzes the formation of pyridoxal 5'-phosphate from ribose 5-phosphate (RBP), glyceraldehyde 3-phosphate (G3P) and ammonia. The ammonia is provided by the PdxT subunit. Can also use ribulose 5-phosphate and dihydroxyacetone phosphate as substrates, resulting from enzyme-catalyzed isomerization of RBP and G3P, respectively. In Geobacillus kaustophilus (strain HTA426), this protein is Pyridoxal 5'-phosphate synthase subunit PdxS.